Consider the following 66-residue polypeptide: Large ribosomal subunit protein bL33c (66 aa).

The protein belongs to the bacterial ribosomal protein bL33 family.

Its subcellular location is the plastid. It is found in the chloroplast. This Helianthus annuus (Common sunflower) protein is Large ribosomal subunit protein bL33c.